Here is a 369-residue protein sequence, read N- to C-terminus: Peptide chain release factor 2 (369 aa).

N5-methylglutamine is present on Q251.

Belongs to the prokaryotic/mitochondrial release factor family. In terms of processing, methylated by PrmC. Methylation increases the termination efficiency of RF2.

It is found in the cytoplasm. Its function is as follows. Peptide chain release factor 2 directs the termination of translation in response to the peptide chain termination codons UGA and UAA. The sequence is that of Peptide chain release factor 2 from Campylobacter fetus subsp. fetus (strain 82-40).